The following is a 1441-amino-acid chain: Gag-Pol polyprotein (1441 aa).

A lipid anchor (N-myristoyl glycine; by host) is attached at glycine 2. The Nuclear export signal signature appears at 16-22 (FEKIRLK). The Nuclear localization signal motif lies at 26 to 32 (KKCYRLK). Residues 204–226 (THPQQQPAQPGGGLRTPSGSDIA) form a disordered region. 2 CCHC-type zinc fingers span residues 386 to 403 (PICF…FFKA) and 407 to 424 (KGCW…QCPK). A compositionally biased stretch (polar residues) spans 444–466 (TGELSGTRGDSNSSTIRGETSAE). Positions 444–494 (TGELSGTRGDSNSSTIRGETSAENSEHLSEIRERAQAEDEGGEERGGFSFP) are disordered. Residues 467–480 (NSEHLSEIRERAQA) show a composition bias toward basic and acidic residues. The 72-residue stretch at 513-584 (IRALLDTGAD…TPIDIIGRNI (72 aa)) folds into the Peptidase A2 domain. Aspartate 518 functions as the For protease activity; shared with dimeric partner in the catalytic mechanism. A Reverse transcriptase domain is found at 640–830 (EGKISRVDPG…PPFHWMGYEL (191 aa)). Mg(2+)-binding residues include aspartate 706, aspartate 781, and aspartate 782. Residues 823 to 831 (FHWMGYELH) are RT 'primer grip'. Positions 994–1010 (WEDWWHEYWQCTWIPEV) match the Tryptophan repeat motif motif. The region spanning 1030-1153 (LEGVETYYVD…IDKLVSSGIR (124 aa)) is the RNase H type-1 domain. Aspartate 1039, glutamate 1074, aspartate 1094, and aspartate 1145 together coordinate Mg(2+). The Integrase-type zinc-finger motif lies at 1159–1200 (QNIEPAQEEHEKYHSNEAQLREKFHLPALVAKQIVQSCSKCC). Zn(2+)-binding residues include histidine 1168, histidine 1172, cysteine 1196, and cysteine 1199. In terms of domain architecture, Integrase catalytic spans 1210-1360 (TDASLGVWQI…TAGERIVNMI (151 aa)). Mg(2+) is bound by residues aspartate 1220 and aspartate 1272. The integrase-type DNA-binding region spans 1379-1426 (FKVYFREGRDQLWKGPGILLWKGEGAVVLKYQEEIKIVPRRKCKIIKD).

Homotrimer. Interacts with gp41 (via C-terminus). In terms of assembly, homodimer. The active site consists of two apposed aspartic acid residues. As to quaternary structure, heterodimer of p66 RT and p51 RT (RT p66/p51). Heterodimerization of RT is essential for DNA polymerase activity. Despite the sequence identities, p66 RT and p51 RT have distinct folding. Homotetramer; may further associate as a homohexadecamer. It depends on Mg(2+) as a cofactor. Specific enzymatic cleavages by the viral protease yield mature proteins. The protease is released by autocatalytic cleavage. The polyprotein is cleaved during and after budding, this process is termed maturation. Proteolytic cleavage of p66 RT removes the RNase H domain to yield the p51 RT subunit. Post-translationally, capsid protein p24 is phosphorylated.

The protein localises to the virion. Its subcellular location is the host nucleus. It localises to the host cytoplasm. The protein resides in the host cell membrane. The enzyme catalyses Specific for a P1 residue that is hydrophobic, and P1' variable, but often Pro.. It catalyses the reaction Endohydrolysis of RNA in RNA/DNA hybrids. Three different cleavage modes: 1. sequence-specific internal cleavage of RNA. Human immunodeficiency virus type 1 and Moloney murine leukemia virus enzymes prefer to cleave the RNA strand one nucleotide away from the RNA-DNA junction. 2. RNA 5'-end directed cleavage 13-19 nucleotides from the RNA end. 3. DNA 3'-end directed cleavage 15-20 nucleotides away from the primer terminus.. It carries out the reaction 3'-end directed exonucleolytic cleavage of viral RNA-DNA hybrid.. The catalysed reaction is DNA(n) + a 2'-deoxyribonucleoside 5'-triphosphate = DNA(n+1) + diphosphate. With respect to regulation, the viral protease is inhibited by many synthetic protease inhibitors (PIs), such as amprenavir, atazanavir, indinavir, loprinavir, nelfinavir, ritonavir and saquinavir. RT can be inhibited either by nucleoside RT inhibitors (NRTIs) or by non nucleoside RT inhibitors (NNRTIs). NRTIs act as chain terminators, whereas NNRTIs inhibit DNA polymerization by binding a small hydrophobic pocket near the RT active site and inducing an allosteric change in this region. Classical NRTIs are abacavir, adefovir (PMEA), didanosine (ddI), lamivudine (3TC), stavudine (d4T), tenofovir (PMPA), zalcitabine (ddC), and zidovudine (AZT). Classical NNRTIs are atevirdine (BHAP U-87201E), delavirdine, efavirenz (DMP-266), emivirine (I-EBU), and nevirapine (BI-RG-587). The tritherapies used as a basic effective treatment of AIDS associate two NRTIs and one NNRTI. Use of protease inhibitors in tritherapy regimens permit more ambitious therapeutic strategies. Functionally, gag-Pol polyprotein and Gag polyprotein may regulate their own translation, by the binding genomic RNA in the 5'-UTR. At low concentration, Gag-Pol and Gag would promote translation, whereas at high concentration, the polyproteins encapsidate genomic RNA and then shut off translation. Its function is as follows. Matrix protein p17 has two main functions: in infected cell, it targets Gag and Gag-pol polyproteins to the plasma membrane via a multipartite membrane-binding signal, that includes its myristointegration complex. The myristoylation signal and the NLS exert conflicting influences its subcellular localization. The key regulation of these motifs might be phosphorylation of a portion of MA molecules on the C-terminal tyrosine at the time of virus maturation, by virion-associated cellular tyrosine kinase. Implicated in the release from host cell mediated by Vpu. Capsid protein p24 forms the conical core that encapsulates the genomic RNA-nucleocapsid complex in the virion. The core is constituted by capsid protein hexamer subunits. The core is disassembled soon after virion entry. Interaction with host PPIA/CYPA protects the virus from restriction by host TRIM5-alpha and from an unknown antiviral activity in host cells. This capsid restriction by TRIM5 is one of the factors which restricts SIV to the simian species. In terms of biological role, nucleocapsid protein p7 encapsulates and protects viral dimeric unspliced (genomic) RNA. Binds these RNAs through its zinc fingers. Facilitates rearangement of nucleic acid secondary structure during retrotranscription of genomic RNA. This capability is referred to as nucleic acid chaperone activity. Functionally, the aspartyl protease mediates proteolytic cleavages of Gag and Gag-Pol polyproteins during or shortly after the release of the virion from the plasma membrane. Cleavages take place as an ordered, step-wise cascade to yield mature proteins. This process is called maturation. Displays maximal activity during the budding process just prior to particle release from the cell. Also cleaves Nef and Vif, probably concomitantly with viral structural proteins on maturation of virus particles. Hydrolyzes host EIF4GI and PABP1 in order to shut off the capped cellular mRNA translation. The resulting inhibition of cellular protein synthesis serves to ensure maximal viral gene expression and to evade host immune response. Its function is as follows. Reverse transcriptase/ribonuclease H (RT) is a multifunctional enzyme that converts the viral dimeric RNA genome into dsDNA in the cytoplasm, shortly after virus entry into the cell. This enzyme displays a DNA polymerase activity that can copy either DNA or RNA templates, and a ribonuclease H (RNase H) activity that cleaves the RNA strand of RNA-DNA heteroduplexes in a partially processive 3' to 5' endonucleasic mode. Conversion of viral genomic RNA into dsDNA requires many steps. A tRNA binds to the primer-binding site (PBS) situated at the 5'-end of the viral RNA. RT uses the 3' end of the tRNA primer to perform a short round of RNA-dependent minus-strand DNA synthesis. The reading proceeds through the U5 region and ends after the repeated (R) region which is present at both ends of viral RNA. The portion of the RNA-DNA heteroduplex is digested by the RNase H, resulting in a ssDNA product attached to the tRNA primer. This ssDNA/tRNA hybridizes with the identical R region situated at the 3' end of viral RNA. This template exchange, known as minus-strand DNA strong stop transfer, can be either intra- or intermolecular. RT uses the 3' end of this newly synthesized short ssDNA to perform the RNA-dependent minus-strand DNA synthesis of the whole template. RNase H digests the RNA template except for two polypurine tracts (PPTs) situated at the 5'-end and near the center of the genome. It is not clear if both polymerase and RNase H activities are simultaneous. RNase H can probably proceed both in a polymerase-dependent (RNA cut into small fragments by the same RT performing DNA synthesis) and a polymerase-independent mode (cleavage of remaining RNA fragments by free RTs). Secondly, RT performs DNA-directed plus-strand DNA synthesis using the PPTs that have not been removed by RNase H as primers. PPTs and tRNA primers are then removed by RNase H. The 3' and 5' ssDNA PBS regions hybridize to form a circular dsDNA intermediate. Strand displacement synthesis by RT to the PBS and PPT ends produces a blunt ended, linear dsDNA copy of the viral genome that includes long terminal repeats (LTRs) at both ends. Integrase catalyzes viral DNA integration into the host chromosome, by performing a series of DNA cutting and joining reactions. This enzyme activity takes place after virion entry into a cell and reverse transcription of the RNA genome in dsDNA. The first step in the integration process is 3' processing. This step requires a complex comprising the viral genome, matrix protein, Vpr and integrase. This complex is called the pre-integration complex (PIC). The integrase protein removes 2 nucleotides from each 3' end of the viral DNA, leaving recessed CA OH's at the 3' ends. In the second step, the PIC enters cell nucleus. This process is mediated through integrase and Vpr proteins, and allows the virus to infect a non dividing cell. This ability to enter the nucleus is specific of lentiviruses, other retroviruses cannot and rely on cell division to access cell chromosomes. In the third step, termed strand transfer, the integrase protein joins the previously processed 3' ends to the 5' ends of strands of target cellular DNA at the site of integration. The 5'-ends are produced by integrase-catalyzed staggered cuts, 5 bp apart. A Y-shaped, gapped, recombination intermediate results, with the 5'-ends of the viral DNA strands and the 3' ends of target DNA strands remaining unjoined, flanking a gap of 5 bp. The last step is viral DNA integration into host chromosome. This involves host DNA repair synthesis in which the 5 bp gaps between the unjoined strands are filled in and then ligated. Since this process occurs at both cuts flanking the SIV genome, a 5 bp duplication of host DNA is produced at the ends of SIV integration. Alternatively, Integrase may catalyze the excision of viral DNA just after strand transfer, this is termed disintegration. The chain is Gag-Pol polyprotein (gag-pol) from Cercopithecidae (Old World monkeys).